The chain runs to 383 residues: N-acetyldiaminopimelate deacetylase (383 aa).

Residue aspartate 72 is part of the active site. Glutamate 131 (proton acceptor) is an active-site residue.

It belongs to the peptidase M20A family. N-acetyldiaminopimelate deacetylase subfamily.

It catalyses the reaction N-acetyl-(2S,6S)-2,6-diaminopimelate + H2O = (2S,6S)-2,6-diaminopimelate + acetate. The protein operates within amino-acid biosynthesis; L-lysine biosynthesis via DAP pathway; LL-2,6-diaminopimelate from (S)-tetrahydrodipicolinate (acetylase route): step 3/3. Its function is as follows. Catalyzes the conversion of N-acetyl-diaminopimelate to diaminopimelate and acetate. The protein is N-acetyldiaminopimelate deacetylase of Lacticaseibacillus paracasei (strain ATCC 334 / BCRC 17002 / CCUG 31169 / CIP 107868 / KCTC 3260 / NRRL B-441) (Lactobacillus paracasei).